Here is a 239-residue protein sequence, read N- to C-terminus: mRNA turnover protein 4 homolog (239 aa).

The segment at 215–239 is disordered; it reads FQQMGDDLPESASESTEESDSEDDD. Residues S225, S229, and S233 each carry the phosphoserine modification. The segment covering 229–239 has biased composition (acidic residues); that stretch reads STEESDSEDDD.

This sequence belongs to the universal ribosomal protein uL10 family. Associates with the pre-60S ribosomal particle. Interacts with MINAS-60 (product of an alternative open reading frame of RBM10).

The protein resides in the nucleus. Its subcellular location is the nucleolus. The protein localises to the cytoplasm. Functionally, component of the ribosome assembly machinery. Nuclear paralog of the ribosomal protein P0, it binds pre-60S subunits at an early stage of assembly in the nucleolus, and is replaced by P0 in cytoplasmic pre-60S subunits and mature 80S ribosomes. The chain is mRNA turnover protein 4 homolog (MRTO4) from Homo sapiens (Human).